Consider the following 201-residue polypeptide: 3-isopropylmalate dehydratase small subunit 1 (201 aa).

Belongs to the LeuD family. LeuD type 1 subfamily. As to quaternary structure, heterodimer of LeuC and LeuD.

The enzyme catalyses (2R,3S)-3-isopropylmalate = (2S)-2-isopropylmalate. It participates in amino-acid biosynthesis; L-leucine biosynthesis; L-leucine from 3-methyl-2-oxobutanoate: step 2/4. In terms of biological role, catalyzes the isomerization between 2-isopropylmalate and 3-isopropylmalate, via the formation of 2-isopropylmaleate. This is 3-isopropylmalate dehydratase small subunit 1 from Salmonella typhimurium (strain LT2 / SGSC1412 / ATCC 700720).